We begin with the raw amino-acid sequence, 239 residues long: Probable replication-associated protein repA2 (239 aa).

The protein belongs to the IncFII RepA family.

This protein is essential for plasmid replication; it is involved in copy control functions. This is Probable replication-associated protein repA2 (repA2) from Buchnera aphidicola subsp. Baizongia pistaciae (strain Bp).